An 855-amino-acid chain; its full sequence is Cone cGMP-specific 3',5'-cyclic phosphodiesterase subunit alpha' (855 aa).

GAF domains lie at S70 to L219 and D251 to L428. 3',5'-cyclic GMP-binding positions include S92, S116, D164–T167, and T171. The PDEase domain maps to E481–Y814. Residue H557 is the Proton donor of the active site. Positions 561, 597, 598, and 718 each coordinate a divalent metal cation. Residues E823–L855 form a disordered region. Cysteine methyl ester is present on C852. Residue C852 is the site of S-geranylgeranyl cysteine attachment. Residues L853–L855 constitute a propeptide, removed in mature form.

It belongs to the cyclic nucleotide phosphodiesterase family. In terms of assembly, composed of two alpha' subunits that are associated with 3 smaller proteins of 11, 13, and 15 kDa. Requires a divalent metal cation as cofactor.

It localises to the cell membrane. It carries out the reaction 3',5'-cyclic GMP + H2O = GMP + H(+). In terms of biological role, as cone-specific cGMP phosphodiesterase, it plays an essential role in light detection and cone phototransduction by rapidly decreasing intracellular levels of cGMP. The protein is Cone cGMP-specific 3',5'-cyclic phosphodiesterase subunit alpha' (PDE6C) of Bos taurus (Bovine).